We begin with the raw amino-acid sequence, 335 residues long: N-acetyl-gamma-glutamyl-phosphate reductase (335 aa).

Cys-156 is an active-site residue.

This sequence belongs to the NAGSA dehydrogenase family. Type 1 subfamily.

Its subcellular location is the cytoplasm. It carries out the reaction N-acetyl-L-glutamate 5-semialdehyde + phosphate + NADP(+) = N-acetyl-L-glutamyl 5-phosphate + NADPH + H(+). It participates in amino-acid biosynthesis; L-arginine biosynthesis; N(2)-acetyl-L-ornithine from L-glutamate: step 3/4. Catalyzes the NADPH-dependent reduction of N-acetyl-5-glutamyl phosphate to yield N-acetyl-L-glutamate 5-semialdehyde. The chain is N-acetyl-gamma-glutamyl-phosphate reductase from Aeromonas salmonicida (strain A449).